Here is a 218-residue protein sequence, read N- to C-terminus: Peptide methionine sulfoxide reductase MsrA (218 aa).

The segment at Met1–Pro28 is disordered. The active site involves Cys57.

The protein belongs to the MsrA Met sulfoxide reductase family.

It catalyses the reaction L-methionyl-[protein] + [thioredoxin]-disulfide + H2O = L-methionyl-(S)-S-oxide-[protein] + [thioredoxin]-dithiol. The enzyme catalyses [thioredoxin]-disulfide + L-methionine + H2O = L-methionine (S)-S-oxide + [thioredoxin]-dithiol. Its function is as follows. Has an important function as a repair enzyme for proteins that have been inactivated by oxidation. Catalyzes the reversible oxidation-reduction of methionine sulfoxide in proteins to methionine. This Brucella anthropi (strain ATCC 49188 / DSM 6882 / CCUG 24695 / JCM 21032 / LMG 3331 / NBRC 15819 / NCTC 12168 / Alc 37) (Ochrobactrum anthropi) protein is Peptide methionine sulfoxide reductase MsrA.